Here is a 224-residue protein sequence, read N- to C-terminus: MASSSFLLLATLLAMASWQGMASDPSPLQDFCVADMHSPVLVNGFACLNPKDVNADHFFKAAMLDTPRKTNKVGSNVTLINVMQIPGLNTLGISIARIDYAPLGQNPPHTHPRATEILTVLEGTLYVGFVTSNPDNKFFSKVLNKGDVFVFPVGLIHFQFNPNPYKPAVAIAALSSQNPGAITIANAVFGSKPPISDDVLAKAFQVEKGTIDWLQAQFWENNHY.

An N-terminal signal peptide occupies residues M1 to A22. C32 and C47 are disulfide-bonded. A Cupin type-1 domain is found at A62–D212. N76 carries an N-linked (GlcNAc...) asparagine glycan. Residues H109, H111, E116, and H157 each coordinate Mn(2+).

This sequence belongs to the germin family. In terms of assembly, oligomer (believed to be a pentamer but probably hexamer).

The protein resides in the secreted. It is found in the extracellular space. It localises to the apoplast. Functionally, plays a role in broad-spectrum disease resistance. Probably has no oxalate oxidase activity even if the active site is conserved. The sequence is that of Germin-like protein 8-11 from Oryza sativa subsp. japonica (Rice).